The chain runs to 971 residues: Breast cancer type 2 susceptibility protein homolog (971 aa).

Positions 1 to 15 (MDQNGASGSHPNRLS) are enriched in polar residues. 4 disordered regions span residues 1–30 (MDQNGASGSHPNRLSQGRGAHARERGATVS), 130–155 (SRKRDPKSHKAVQNEKRRGSSGLSVQ), 349–395 (KLKL…DQPN), and 420–466 (MQCS…SSHQ). Residues 130–139 (SRKRDPKSHK) are compositionally biased toward basic residues. Residues 349–364 (KLKLEPSSQKEQKSSK) show a composition bias toward basic and acidic residues. Composition is skewed to polar residues over residues 375-392 (SKQSCDINTKNEGTTILD), 420-432 (MQCSNGPSTSKNA), and 453-466 (KQTPNKSQTISSHQ). BRCA2 repeat units lie at residues 570-604 (AEPEFCGFRTASNKAIPISEKMKIKTAEFMAEFQS), 671-705 (NESQFFGFRTASNKAIEITEAMEKRGAMFLAQSKA), and 746-780 (SETEFFGFRTASNKGIVISENTKIKVAQFMSEFQA). A disordered region spans residues 916-971 (MERFAPKPSSTSTPLADRDLNRSKDCTKNRQDAEDMSPICMQPKKSRRLGLSRSRY). Basic and acidic residues predominate over residues 931–948 (ADRDLNRSKDCTKNRQDA). Residues 959–971 (KKSRRLGLSRSRY) are compositionally biased toward basic residues.

Interacts with Rad9. Interacts with spn-A/Rad51. Interacts with cyclin CycG.

It is found in the nucleus. Involved in and required for double-strand break repair by meiotic and mitotic homologous recombination. During meiosis, has a dual role in the repair of meiotic double-stranded breaks and the efficient activation of the meiotic recombination checkpoint. This chain is Breast cancer type 2 susceptibility protein homolog, found in Drosophila melanogaster (Fruit fly).